The sequence spans 433 residues: Ligand-dependent corepressor (433 aa).

The interval 1 to 147 (MQRMIQQFAA…GTREGFGHST (147 aa)) is disordered. Positions 13 to 34 (TSKTSSTQDPSQPNSTKNQSLP) are enriched in polar residues. The span at 36 to 48 (ASPVTTSPTAATT) shows a compositional bias: low complexity. Serine 42 carries the post-translational modification Phosphoserine. The Interaction with nuclear receptors signature appears at 53-57 (LSKLL). Serine 63 bears the Phosphoserine mark. Residues 88-110 (KKSPCASSTSLSHSPGCSSTQGN) show a composition bias toward polar residues. Serine 249 is modified (phosphoserine). Residue lysine 254 forms a Glycyl lysine isopeptide (Lys-Gly) (interchain with G-Cter in SUMO2) linkage. The segment at 299-348 (QNRKSMLDAGPDSWGSDAEQSTSGQPYPTSDQEGDPGSKQPRKKRGRYRQ) is disordered. Residues 316–329 (AEQSTSGQPYPTSD) are compositionally biased toward polar residues. A Nuclear localization signal motif is present at residues 339 to 345 (PRKKRGR). The region spanning 340-392 (RKKRGRYRQYNSEILEEAISVVMSGKMSVSKAQSIYGIPHSTLEYKVKERLGT) is the HTH psq-type domain. The segment at residues 368–388 (VSKAQSIYGIPHSTLEYKVKE) is a DNA-binding region (H-T-H motif). Residues 393–412 (LKNPPKKKMKLMRSEGPDVS) are disordered. Lysine 414 participates in a covalent cross-link: Glycyl lysine isopeptide (Lys-Gly) (interchain with G-Cter in SUMO2).

In terms of assembly, interacts with ESR1 and ESR2 in the presence of estradiol. Interacts with CTBP1, HDAC3 and HDAC6. Component of a large corepressor complex that contains about 20 proteins, including CTBP1, CTBP2, HDAC1 and HDAC2. In terms of tissue distribution, detected in heart and kidney.

The protein resides in the nucleus. Repressor of ligand-dependent transcription activation by various nuclear repressors. Repressor of ligand-dependent transcription activation by ESR1, ESR2, NR3C1, PGR, RARA, RARB, RARG, RXRA and VDR. May act as transcription activator that binds DNA elements with the sequence 5'-CCCTATCGATCGATCTCTACCT-3'. This is Ligand-dependent corepressor (Lcor) from Mus musculus (Mouse).